The chain runs to 233 residues: MIYAQILAGGKGTRMGNVPMPKQFLLLADKPILIHTIEKFTLESRFDAILVVCPADWVSHTEDIIKKYITDERVHVVVGGADRNETLMSGINYIQDHYGIQDDDVVVTHDAVRPFITQRIINDNIVAVLENKAVDTVVPAIDTIVRGANDQVTDIPVRSEMYQGQTPQSFHIKILIDSYNALSSEQKASLSDSCKICSLAGQKVSLVRGENYNFKITTPFDLRVASALVEKRS.

Residues 7–10 (LAGG) and 80–86 (GADRNET) contribute to the CTP site.

It belongs to the IspD/TarI cytidylyltransferase family. TarI subfamily.

It carries out the reaction D-ribitol 5-phosphate + CTP + H(+) = CDP-L-ribitol + diphosphate. Its pathway is cell wall biogenesis; poly(ribitol phosphate) teichoic acid biosynthesis. Its function is as follows. Catalyzes the transfer of the cytidylyl group of CTP to D-ribitol 5-phosphate. This is Ribitol-5-phosphate cytidylyltransferase from Lactiplantibacillus plantarum (strain ATCC BAA-793 / NCIMB 8826 / WCFS1) (Lactobacillus plantarum).